The chain runs to 480 residues: Serralysin (480 aa).

His-181 is a binding site for Zn(2+). Residue Glu-182 is part of the active site. Residues His-185 and His-191 each contribute to the Zn(2+) site. Ca(2+)-binding residues include Arg-260, Asp-263, Asp-292, Gly-294, Gly-295, Asp-297, Thr-334, and Glu-336. Hemolysin-type calcium-binding repeat units follow at residues Ile-339–Leu-356 and Lys-357–Leu-374.

The protein belongs to the peptidase M10B family. Zn(2+) is required as a cofactor. Requires Ca(2+) as cofactor.

The protein localises to the secreted. The enzyme catalyses Preferential cleavage of bonds with hydrophobic residues in P1'.. The polypeptide is Serralysin (prtA) (Photorhabdus laumondii subsp. laumondii (strain DSM 15139 / CIP 105565 / TT01) (Photorhabdus luminescens subsp. laumondii)).